The primary structure comprises 200 residues: BmK-YA precursor (200 aa).

An N-terminal signal peptide occupies residues 1-23 (MIFHQFYSILILCLIFPNQVVQS). The propeptide occupies 24-34 (DKERQDWIPSD). Residues 30–200 (WIPSDYGGYM…GYMNPAGRSD (171 aa)) are disordered. Ala-42 carries the post-translational modification Alanine amide. The propeptide occupies 45 to 100 (SDEERQDWIPSDYGGHMNPAGRSDEERQDWIPSDYGGHMNPAGRSNEERQDWIPSD). Ala-108 carries the post-translational modification Alanine amide. Positions 111–144 (SDEERQDWIPSDYGGHMNPAGRSNEERQDWIPSD) are excised as a propeptide. An Alanine amide modification is found at Ala-152. A propeptide spanning residues 155 to 188 (SDEERQDWIPSDYGGHMNPAGRSDEERQDWIPSD) is cleaved from the precursor. Residue Ala-196 is modified to Alanine amide. A propeptide spanning residues 199–200 (SD) is cleaved from the precursor.

In terms of tissue distribution, venom gland.

It localises to the secreted. Its function is as follows. Synthetic BmK-YA activates human opioid receptors in vitro, with highest activity on the delta-type/OPRD1 receptor (EC(50)=2.5 uM) and lower activity on mu-type/OPRM1 and kappa-type/OPRK1 receptors (EC(50)=17 uM and 30 uM, respectively). The sequence is that of BmK-YA precursor from Olivierus martensii (Manchurian scorpion).